The sequence spans 383 residues: Cobalt-precorrin-5B C(1)-methyltransferase (383 aa).

The disordered stretch occupies residues 1–24 (MQPSARRPFDLATPAPNGLRRGRT).

The protein belongs to the CbiD family.

It catalyses the reaction Co-precorrin-5B + S-adenosyl-L-methionine = Co-precorrin-6A + S-adenosyl-L-homocysteine. It participates in cofactor biosynthesis; adenosylcobalamin biosynthesis; cob(II)yrinate a,c-diamide from sirohydrochlorin (anaerobic route): step 6/10. Functionally, catalyzes the methylation of C-1 in cobalt-precorrin-5B to form cobalt-precorrin-6A. The sequence is that of Cobalt-precorrin-5B C(1)-methyltransferase from Ralstonia nicotianae (strain ATCC BAA-1114 / GMI1000) (Ralstonia solanacearum).